The primary structure comprises 155 residues: Large ribosomal subunit protein bL17 (155 aa).

The protein belongs to the bacterial ribosomal protein bL17 family. Part of the 50S ribosomal subunit. Contacts protein L32.

In Syntrophotalea carbinolica (strain DSM 2380 / NBRC 103641 / GraBd1) (Pelobacter carbinolicus), this protein is Large ribosomal subunit protein bL17.